Reading from the N-terminus, the 504-residue chain is MNTLIDTFTVRKDELFTALVQHIQISFVSLFIAVLIALPLGIYLTRHKRLAEPIIQVAAIFQTIPSLALLGLLIPLVGIGIVPAIIALVIYALLPILRNTYTGIKEVDPALVEASRAMGMNKWKRLYKVQLPLAMPVIMAGIRTAMVLIIGTATLAALIGAGGLGDLILLGIDRNDNSLILLGAIPAALLAILFDFLLRFLEKASFKSTIITISAGILLTAAIIVVPYFASDKKEITIAGKLGAEPEILINMYKLVIEDETDLKVNVKPNMGKTSFVFNALKSGDIDIYPEFTGTVLETFLKENAKTHDPEEVYTQARDGLAKDFDMTYLKPMKYNNTYALAVSPEFAKENNLEKISDLGPVSDQVKAGFTLEFKDRSDGYKGIQDKYGLTFSNLKTMEPKLRYNAIKSGDINLLDAYSTDSELAQYKLKVLEDDQQLFPPYQGAPLMLTKTLDKYPELKKPLNKLAGKITDDEMRKMNYEVNVNGKSAYTVAKDYLKDQGIIK.

Residues 19-198 (LVQHIQISFV…LLAILFDFLL (180 aa)) form the ABC transmembrane type-1 domain. The next 6 helical transmembrane spans lie at 25–44 (ISFV…GIYL), 57–74 (VAAI…GLLI), 81–97 (IVPA…LPIL), 146–170 (MVLI…LILL), 179–198 (LILL…DFLL), and 210–229 (IITI…VPYF). The segment at 231 to 504 (SDKKEITIAG…DYLKDQGIIK (274 aa)) is ergothioneine binding domain.

The protein in the N-terminal section; belongs to the binding-protein-dependent transport system permease family. It in the C-terminal section; belongs to the OsmX family. In terms of assembly, the complex is probably composed of at least an ATP-binding protein (EgtUA) and a transmembrane protein (EgtUBC).

The protein resides in the membrane. Part of an ABC transporter complex EgtU required for the uptake of ergothioneine (EGT), a natural low-molecular weight (LMW) thiol antioxidant. Responsible for the translocation of the substrate across the membrane. Also contains a C-terminal periplasmic solute-binding domain (SBD) which binds to EGT with sub-micromolar affinity. Does not bind glycine betaine, carnitine, choline, proline, or cholate. Plays a role in bile acid tolerance. Dispensable for choline uptake. Probably not involved in betaine, carnitine or choline mediated osmo- or chill tolerance. Plays a role in enhancing virulence in mice. The protein is Probable ergothioneine transporter EgtUBC of Listeria monocytogenes serovar 1/2a (strain ATCC BAA-679 / EGD-e).